The following is a 122-amino-acid chain: Small ribosomal subunit protein uS13 (122 aa).

Positions 99-122 are disordered; that stretch reads RGQRTHTNARTRKGPAKAIAGKKK.

The protein belongs to the universal ribosomal protein uS13 family. As to quaternary structure, part of the 30S ribosomal subunit. Forms a loose heterodimer with protein S19. Forms two bridges to the 50S subunit in the 70S ribosome.

Functionally, located at the top of the head of the 30S subunit, it contacts several helices of the 16S rRNA. In the 70S ribosome it contacts the 23S rRNA (bridge B1a) and protein L5 of the 50S subunit (bridge B1b), connecting the 2 subunits; these bridges are implicated in subunit movement. Contacts the tRNAs in the A and P-sites. This chain is Small ribosomal subunit protein uS13, found in Cereibacter sphaeroides (strain ATCC 17029 / ATH 2.4.9) (Rhodobacter sphaeroides).